A 248-amino-acid polypeptide reads, in one-letter code: Ubiquinone biosynthesis O-methyltransferase (248 aa).

The S-adenosyl-L-methionine site is built by arginine 40, glycine 71, aspartate 92, and methionine 135.

Belongs to the methyltransferase superfamily. UbiG/COQ3 family.

It carries out the reaction a 3-demethylubiquinol + S-adenosyl-L-methionine = a ubiquinol + S-adenosyl-L-homocysteine + H(+). The catalysed reaction is a 3-(all-trans-polyprenyl)benzene-1,2-diol + S-adenosyl-L-methionine = a 2-methoxy-6-(all-trans-polyprenyl)phenol + S-adenosyl-L-homocysteine + H(+). Its pathway is cofactor biosynthesis; ubiquinone biosynthesis. Functionally, O-methyltransferase that catalyzes the 2 O-methylation steps in the ubiquinone biosynthetic pathway. The chain is Ubiquinone biosynthesis O-methyltransferase from Ruegeria pomeroyi (strain ATCC 700808 / DSM 15171 / DSS-3) (Silicibacter pomeroyi).